The sequence spans 333 residues: NADH-quinone oxidoreductase subunit H (333 aa).

The next 8 membrane-spanning stretches (helical) occupy residues 15 to 35, 88 to 108, 117 to 137, 159 to 179, 191 to 211, 241 to 261, 273 to 293, and 313 to 333; these read FFIF…FVTY, FILA…VIPF, IGVG…GVLT, ISYE…TGSL, VWYI…AVAE, FFML…TVLF, FIPG…LFIW, and VLLP…ELFF.

The protein belongs to the complex I subunit 1 family. As to quaternary structure, NDH-1 is composed of 14 different subunits. Subunits NuoA, H, J, K, L, M, N constitute the membrane sector of the complex.

The protein resides in the cell membrane. The catalysed reaction is a quinone + NADH + 5 H(+)(in) = a quinol + NAD(+) + 4 H(+)(out). Functionally, NDH-1 shuttles electrons from NADH, via FMN and iron-sulfur (Fe-S) centers, to quinones in the respiratory chain. The immediate electron acceptor for the enzyme in this species is believed to be ubiquinone. Couples the redox reaction to proton translocation (for every two electrons transferred, four hydrogen ions are translocated across the cytoplasmic membrane), and thus conserves the redox energy in a proton gradient. This subunit may bind ubiquinone. This is NADH-quinone oxidoreductase subunit H from Bacillus cytotoxicus (strain DSM 22905 / CIP 110041 / 391-98 / NVH 391-98).